An 820-amino-acid chain; its full sequence is MLYASGRLLAARAATTLSAPPRARGPALRGKRRELQIPWHLETPSYDPLTGQRTRPGVPPARRVILRKGRMPPAIGGGLAGSELRPRRGRCVPQAARAVSRDVVPQAAARKLKRPAWSSRRFQAAGWWATLAVVTLLSFATRFHRLDQPAHICWDETHFGKMGSYYINRTFFFDVHPPLGKMLIGLAGYLSGYDGTFLFQKPGDRYEHHSYMGMRGFCAFLGSWLIPFAYLTVLDLSKSFPAALLTAALLTFDTGCLTLSQYILLDPILMFFIMAAMLSMVKYNSCANRPFSAPWWFWLSLTGISLAGALGVKFVGLFIIVQVGLNTISDLWHLFGDLSLSLVTVGKHLTARILCLIVLPLVLYVTIFAVHVMVLNKSGPGDGFFSSAFQARLSGNSLHNASIPEHLAYGSVITVKNLRMAIGYLHSHRHLYPEGIGARQQQVTTYLHKDYNNLWIIKKYNANTDPLDPSFPVEFVRHGDIIRLEHKETTRNLHSHYHEAPLTRKHYQVTGYGINGTGDSNDFWRIEVVNRKFGNRIKVLRSRIRLIHLVTGCVLGSSGKILPKWGWEQLEVTCTPYLKETTNSIWNIEEHINPKLPNISLDVLQPSFPEILLESHMVMIRGNNGLKPKDNEFTSKPWHWPINYQGLRFSGANDTDFRVYLLGNPVVWWLNLVSIVLYLLSGSTIAVAMQRGIQLPAELQGLTKVLLRGGGQLLLGWMLHYFPFFLMGRILYFHHYFPAMLFSSMLTGILWDTLLRLCAWGLAPSPLGRRIHAVGILSLLLTTAYSFYLFHPLAYGMVGPLAQEPESPMAGLRWLESWDF.

A helical transmembrane segment spans residues 124–144; that stretch reads AAGWWATLAVVTLLSFATRFH. Asparagine 168 is a glycosylation site (N-linked (GlcNAc...) asparagine). 5 helical membrane-spanning segments follow: residues 170–190, 216–236, 261–281, 301–321, and 353–373; these read TFFFDVHPPLGKMLIGLAGYL, GFCAFLGSWLIPFAYLTVLDL, QYILLDPILMFFIMAAMLSMV, LTGISLAGALGVKFVGLFIIV, and ILCLIVLPLVLYVTIFAVHVM. 2 N-linked (GlcNAc...) asparagine glycosylation sites follow: asparagine 376 and asparagine 400. MIR domains follow at residues 404 to 460, 473 to 529, and 534 to 591; these read PEHL…IKKY, VEFV…IEVV, and GNRI…IEEH. Asparagine 515 is a glycosylation site (N-linked (GlcNAc...) asparagine). Residues asparagine 598 and asparagine 653 are each glycosylated (N-linked (GlcNAc...) asparagine). A run of 4 helical transmembrane segments spans residues 659-679, 713-733, 735-755, and 774-794; these read VYLLGNPVVWWLNLVSIVLYL, LLLGWMLHYFPFFLMGRILYF, HYFPAMLFSSMLTGILWDTLL, and VGILSLLLTTAYSFYLFHPLA.

This sequence belongs to the glycosyltransferase 39 family. Post-translationally, N-glycosylated. In terms of tissue distribution, ubiquitous. Highly expressed in the acrosome of cap phase spermatids, in spermatocytes and liver. Isoform 1 seems to be testis-specific.

The protein localises to the endoplasmic reticulum membrane. The catalysed reaction is a di-trans,poly-cis-dolichyl beta-D-mannosyl phosphate + L-seryl-[protein] = 3-O-(alpha-D-mannosyl)-L-seryl-[protein] + a di-trans,poly-cis-dolichyl phosphate + H(+). It catalyses the reaction a di-trans,poly-cis-dolichyl beta-D-mannosyl phosphate + L-threonyl-[protein] = 3-O-(alpha-D-mannosyl)-L-threonyl-[protein] + a di-trans,poly-cis-dolichyl phosphate + H(+). It functions in the pathway protein modification; protein glycosylation. Transfers mannosyl residues to the hydroxyl group of serine or threonine residues. Coexpression of both POMT1 and POMT2 is necessary for enzyme activity, expression of either POMT1 or POMT2 alone is insufficient. Essentially dedicated to O-mannosylation of alpha-DAG1 and few other proteins but not of cadherins and protocaherins. This is Protein O-mannosyl-transferase 2 (Pomt2) from Mus musculus (Mouse).